The following is a 425-amino-acid chain: Enolase (425 aa).

Q162 is a binding site for (2R)-2-phosphoglycerate. E204 serves as the catalytic Proton donor. Mg(2+) contacts are provided by D241, E284, and D311. The (2R)-2-phosphoglycerate site is built by K336, R365, S366, and K387. K336 functions as the Proton acceptor in the catalytic mechanism.

This sequence belongs to the enolase family. Requires Mg(2+) as cofactor.

Its subcellular location is the cytoplasm. The protein resides in the secreted. The protein localises to the cell surface. It carries out the reaction (2R)-2-phosphoglycerate = phosphoenolpyruvate + H2O. It participates in carbohydrate degradation; glycolysis; pyruvate from D-glyceraldehyde 3-phosphate: step 4/5. Its function is as follows. Catalyzes the reversible conversion of 2-phosphoglycerate (2-PG) into phosphoenolpyruvate (PEP). It is essential for the degradation of carbohydrates via glycolysis. This is Enolase from Brucella melitensis biotype 2 (strain ATCC 23457).